A 607-amino-acid chain; its full sequence is Albumin B (607 aa).

An N-terminal signal peptide occupies residues 1 to 18 (MKWITLICLLISSSFIES). A propeptide spanning residues 19–24 (RILFKR) is cleaved from the precursor. 3 consecutive Albumin domains span residues 22-209 (FKRD…KQLM), 210-402 (KQSH…RFMN), and 403-600 (EAKE…VLIE). Histidine 30 serves as a coordination point for Cu cation. 17 disulfides stabilise this stretch: cysteine 80–cysteine 88, cysteine 101–cysteine 117, cysteine 116–cysteine 127, cysteine 147–cysteine 192, cysteine 191–cysteine 200, cysteine 223–cysteine 269, cysteine 268–cysteine 276, cysteine 288–cysteine 302, cysteine 301–cysteine 312, cysteine 339–cysteine 384, cysteine 383–cysteine 392, cysteine 415–cysteine 461, cysteine 460–cysteine 471, cysteine 484–cysteine 500, cysteine 499–cysteine 510, cysteine 537–cysteine 582, and cysteine 581–cysteine 590.

This sequence belongs to the ALB/AFP/VDB family. As to expression, plasma.

The protein localises to the secreted. Its function is as follows. Serum albumin, the main protein of plasma, has a good binding capacity for water, Ca(2+), Na(+), K(+), fatty acids, hormones, bilirubin and drugs. Its main function is the regulation of the colloidal osmotic pressure of blood. This chain is Albumin B (alb-b), found in Xenopus laevis (African clawed frog).